Consider the following 69-residue polypeptide: MTKPADIRVKSADELGALLIDLRKEQFNLRFQQATGQLEKTGRAVQVRRDIARVKTILAERQRAAAPKA.

The protein belongs to the universal ribosomal protein uL29 family.

The protein is Large ribosomal subunit protein uL29 of Granulibacter bethesdensis (strain ATCC BAA-1260 / CGDNIH1).